An 886-amino-acid chain; its full sequence is DNA double-strand break repair Rad50 ATPase (886 aa).

Residues 32 to 38 and Gln137 contribute to the ATP site; that span reads NGAGKSS. Coiled coils occupy residues 181-240 and 320-416; these read IRSL…KEIK and RKKE…GDLN. One can recognise a Zinc-hook domain in the interval 391–489; it reads IKDVSDRINQ…EREELEATRN (99 aa). Residues Cys437 and Cys440 each coordinate Zn(2+). Coiled-coil stretches lie at residues 450–657 and 682–718; these read AKIR…ISEL and EADK…EESK.

The protein belongs to the SMC family. RAD50 subfamily. Homodimer. Forms a heterotetramer composed of two Mre11 subunits and two Rad50 subunits. Interacts with Mre11 and HerA. Requires Zn(2+) as cofactor.

In terms of biological role, part of the Rad50/Mre11 complex, which is involved in the early steps of DNA double-strand break (DSB) repair. The complex may facilitate opening of the processed DNA ends to aid in the recruitment of HerA and NurA. Rad50 controls the balance between DNA end bridging and DNA resection via ATP-dependent structural rearrangements of the Rad50/Mre11 complex. This chain is DNA double-strand break repair Rad50 ATPase, found in Sulfolobus acidocaldarius (strain ATCC 33909 / DSM 639 / JCM 8929 / NBRC 15157 / NCIMB 11770).